Reading from the N-terminus, the 100-residue chain is RING finger protein Z (100 aa).

Glycine 2 carries N-myristoyl glycine; by host lipidation. The RING-type; atypical zinc finger occupies 43–79 (CRCCWFANTNLIKCSDHYICLKCLNIMLGKSSFCDIC). The short motif at 93–96 (PSAP) is the PTAP/PSAP motif element.

The protein belongs to the arenaviridae Z protein family. In terms of assembly, interacts with protein NP; this interaction probably directs the encapsidated genome to budding sites. Interacts (via RING domain) with polymerase L; this interaction inhibits viral transcription and replication, Z partially blocks the product exit tunnel for the releasing nascent RNA product. Interacts with the glycoprotein complex; this interaction plays a role in virion budding. Interacts with host eIF4E; this interaction results in eIF4E reduced affinity for its substrate, the 5'-m7 G cap structure. Interacts (via late-budding domain) with host TSG101; this interaction is essential for budding and release of viral particles. Interacts with host RPLP0; this interaction may serve to load ribosome-like particles inside the virion. Interacts with host PML; this interaction induces PML bodies redistribution in the cytoplasm upon viral infection. In terms of processing, myristoylation is required for the role of RING finger protein Z in assembly and budding.

Its subcellular location is the virion. The protein resides in the host cytoplasm. It is found in the host perinuclear region. The protein localises to the host cell membrane. In terms of biological role, plays a crucial role in virion assembly and budding. Expressed late in the virus life cycle, it acts as an inhibitor of viral transcription and RNA synthesis by interacting with the viral polymerase L. Presumably recruits the NP encapsidated genome to cellular membranes at budding sites via direct interaction with NP. Plays critical roles in the final steps of viral release by interacting with host TSG101, a member of the vacuolar protein-sorting pathway and using other cellular host proteins involved in vesicle formation pathway. The budding of the virus progeny occurs after association of protein Z with the viral glycoprotein complex SSP-GP1-GP2 at the cell periphery, step that requires myristoylation of protein Z. Also selectively represses protein production by associating with host eIF4E. In cell-based minigenome assay, has an inhibitory effect on the ribonucleoprotein machinery (vRNP), which is responsible for the replication and transcription of the viral genome. This is RING finger protein Z from Homo sapiens (Human).